Here is a 224-residue protein sequence, read N- to C-terminus: N-(5'-phosphoribosyl)anthranilate isomerase (224 aa).

The protein belongs to the TrpF family.

The enzyme catalyses N-(5-phospho-beta-D-ribosyl)anthranilate = 1-(2-carboxyphenylamino)-1-deoxy-D-ribulose 5-phosphate. The protein operates within amino-acid biosynthesis; L-tryptophan biosynthesis; L-tryptophan from chorismate: step 3/5. The sequence is that of N-(5'-phosphoribosyl)anthranilate isomerase from Sinorhizobium fredii (strain NBRC 101917 / NGR234).